A 145-amino-acid chain; its full sequence is Bacilliredoxin ABC2045 (145 aa).

It belongs to the bacilliredoxin family.

This chain is Bacilliredoxin ABC2045, found in Shouchella clausii (strain KSM-K16) (Alkalihalobacillus clausii).